A 198-amino-acid polypeptide reads, in one-letter code: Holliday junction resolvase RecU (198 aa).

The disordered stretch occupies residues 1–29 (MIRYPNGKSYQPKTAASSLQKKPSYSNRG). Polar residues predominate over residues 8-29 (KSYQPKTAASSLQKKPSYSNRG). Thr-83, Asp-85, Glu-98, and Gln-117 together coordinate Mg(2+).

It belongs to the RecU family. The cofactor is Mg(2+).

Its subcellular location is the cytoplasm. The catalysed reaction is Endonucleolytic cleavage at a junction such as a reciprocal single-stranded crossover between two homologous DNA duplexes (Holliday junction).. In terms of biological role, endonuclease that resolves Holliday junction intermediates in genetic recombination. Cleaves mobile four-strand junctions by introducing symmetrical nicks in paired strands. Promotes annealing of linear ssDNA with homologous dsDNA. Required for DNA repair, homologous recombination and chromosome segregation. The protein is Holliday junction resolvase RecU of Bacillus licheniformis (strain ATCC 14580 / DSM 13 / JCM 2505 / CCUG 7422 / NBRC 12200 / NCIMB 9375 / NCTC 10341 / NRRL NRS-1264 / Gibson 46).